A 265-amino-acid chain; its full sequence is MLKGFAWIISVGNELLIGRVVNTNAAWLAAKLTYLGYAVRRIVVVPDEENEIVEAFRDAMERSDVVISTGGLGPTPDDITNLAFCKALGVEAEVNEEALRMVREKYESRGYPMTPEREKMAKMPPGAVPLPNPVGTAPGILYQRGDKVVVLLPGVPREMEAIFENSVEPLLKSRGPPVYFSEKVVVVRGVPEADIAPILKEVMKIDPRLYVKSHPKGFEVGAPLLHIHIYASAGSEEEAQGLVKKVAERLVELLKSRPGAEVSTS.

The protein belongs to the CinA family.

In Pyrobaculum arsenaticum (strain DSM 13514 / JCM 11321 / PZ6), this protein is Protein Pars_0096.